Reading from the N-terminus, the 465-residue chain is Pre-mRNA-splicing factor URN1 (465 aa).

The region spanning 1–32 is the WW domain; that stretch reads MRGEWQEFKTPAGKKYYYNKNTKQSRWEKPNL. Disordered stretches follow at residues 28 to 49, 144 to 198, and 266 to 288; these read EKPN…QTER, ERKD…VNQD, and ERSG…DSEV. Position 150 is a phosphoserine (Ser-150). Residues 160–175 are compositionally biased toward polar residues; the sequence is LQESHTGLVSGYGSSS. Over residues 176–192 the composition is skewed to acidic residues; that stretch reads GEEDEEEDEEEDEENEE. The FF domain occupies 212–266; that stretch reads DIDERNIFFELFDRYKLDKFSTWSLQSKKIENDPDFYKIRDDTVRESLFEEWCGE. The span at 274–288 shows a compositional bias: acidic residues; it reads EESDSEDNSEDDSEV.

In terms of assembly, component of the precatalytic spliceosomal complex B. Interacts with PRP19.

Its subcellular location is the nucleus. Its function is as follows. Component of the spliceosome involved in mRNA processing. The sequence is that of Pre-mRNA-splicing factor URN1 (URN1) from Saccharomyces cerevisiae (strain ATCC 204508 / S288c) (Baker's yeast).